A 405-amino-acid chain; its full sequence is MCSIGEDDVGDEGATHAMVAESLPTGIVISPGDCNKCGVVSSELYKLNFRVAECRDCFLNHARHKFRASLGAAKVLPRNAEVLLAVDGSAESLVLLDMLHFAQTQNTFRRLHCNARVVYIDDQSVHGGESMNLQALQALGTRYEPLEFYVVELGASACSLQRLGQYSTSLKEPNGLNTKLEKLRSLTARQDYHQQQRKNLLASVAQKLSCSHVFEPSVSGDLATQLLTSIALGRGGSAALDVALLDDRLAAGVKLLRPLRDLNEQEVRFYVHACQLKPLRESGSSYGQERGQTASLQNLTAAFVGNLQQNYPATVSTVFRTGDKIAANAHMEQASCAQCQSPLDAKLSDTLLAIEYSRAVSEAGVGLSKDGDASESLAKQRLEFKDGLCHACRCIQLELGYDTLS.

This sequence belongs to the CTU2/NCS2 family.

The protein localises to the cytoplasm. Its pathway is tRNA modification; 5-methoxycarbonylmethyl-2-thiouridine-tRNA biosynthesis. Its function is as follows. Plays a central role in 2-thiolation of mcm(5)S(2)U at tRNA wobble positions of tRNA(Lys), tRNA(Glu) and tRNA(Gln). May act by forming a heterodimer with NCS6/CTU1 that ligates sulfur from thiocarboxylated URM1 onto the uridine of tRNAs at wobble position. The sequence is that of Cytoplasmic tRNA 2-thiolation protein 2 from Drosophila persimilis (Fruit fly).